Here is a 424-residue protein sequence, read N- to C-terminus: Serine--tRNA ligase (424 aa).

231-233 (TAE) contacts L-serine. 262–264 (RSE) lines the ATP pocket. E285 serves as a coordination point for L-serine. 349–352 (EISS) provides a ligand contact to ATP. Position 385 (S385) interacts with L-serine.

Belongs to the class-II aminoacyl-tRNA synthetase family. Type-1 seryl-tRNA synthetase subfamily. In terms of assembly, homodimer. The tRNA molecule binds across the dimer.

It localises to the cytoplasm. The catalysed reaction is tRNA(Ser) + L-serine + ATP = L-seryl-tRNA(Ser) + AMP + diphosphate + H(+). The enzyme catalyses tRNA(Sec) + L-serine + ATP = L-seryl-tRNA(Sec) + AMP + diphosphate + H(+). Its pathway is aminoacyl-tRNA biosynthesis; selenocysteinyl-tRNA(Sec) biosynthesis; L-seryl-tRNA(Sec) from L-serine and tRNA(Sec): step 1/1. Its function is as follows. Catalyzes the attachment of serine to tRNA(Ser). Is also able to aminoacylate tRNA(Sec) with serine, to form the misacylated tRNA L-seryl-tRNA(Sec), which will be further converted into selenocysteinyl-tRNA(Sec). In Bacillus cytotoxicus (strain DSM 22905 / CIP 110041 / 391-98 / NVH 391-98), this protein is Serine--tRNA ligase.